The primary structure comprises 231 residues: PIAGSMVLAAILLKLGGYGIIRMMQILPTTKTDMFLPFIVLALWGAILANLTCLQQTDLKSLIAYSSISHMGLVVAAIIIQTPWGLTGAMTLMIAHGFTSSALFCLANTTYERTHTRILILTRGFHNILPMTTTWWLLANLMNIATPPTLNFTSELLIMSTLFNWCPTTIILLGLSMLITASYSLHMFLSTQMGPTPLNNQTEPTHSREHLLMALHLIPLMMISMKPELII.

A run of 6 helical transmembrane segments spans residues 1–21, 34–54, 61–80, 84–106, 128–148, and 169–189; these read PIAG…YGII, MFLP…LTCL, SLIA…AIII, WGLT…LFCL, ILPM…ATPP, and TIIL…HMFL.

It belongs to the complex I subunit 4 family.

Its subcellular location is the mitochondrion membrane. The enzyme catalyses a ubiquinone + NADH + 5 H(+)(in) = a ubiquinol + NAD(+) + 4 H(+)(out). Functionally, core subunit of the mitochondrial membrane respiratory chain NADH dehydrogenase (Complex I) that is believed to belong to the minimal assembly required for catalysis. Complex I functions in the transfer of electrons from NADH to the respiratory chain. The immediate electron acceptor for the enzyme is believed to be ubiquinone. The polypeptide is NADH-ubiquinone oxidoreductase chain 4 (MT-ND4) (Atropoides picadoi (Picado's pit viper)).